The sequence spans 661 residues: Heme transporter BhuA (661 aa).

The first 23 residues, 1–23, serve as a signal peptide directing secretion; that stretch reads MKFTRTLVLVSTSLLATVATSQA. The TBDR plug domain occupies 48 to 159; the sequence is KDNIEATGGT…AAGAIRYETV (112 aa). The region spanning 170–661 is the TBDR beta-barrel domain; the sequence is TFGARIIGSY…TFTFQTAFKF (492 aa).

This sequence belongs to the TonB-dependent receptor family.

The protein localises to the cell outer membrane. Its function is as follows. Heme transporter playing an important role in stationary-phase iron acquisition and required for maintenance of chronic infection in mice. The chain is Heme transporter BhuA (bhuA) from Brucella abortus (strain 2308).